The chain runs to 465 residues: L-seryl-tRNA(Sec) selenium transferase (465 aa).

Lys294 bears the N6-(pyridoxal phosphate)lysine mark.

Belongs to the SelA family. Pyridoxal 5'-phosphate is required as a cofactor.

It localises to the cytoplasm. It catalyses the reaction L-seryl-tRNA(Sec) + selenophosphate + H(+) = L-selenocysteinyl-tRNA(Sec) + phosphate. It participates in aminoacyl-tRNA biosynthesis; selenocysteinyl-tRNA(Sec) biosynthesis; selenocysteinyl-tRNA(Sec) from L-seryl-tRNA(Sec) (bacterial route): step 1/1. Functionally, converts seryl-tRNA(Sec) to selenocysteinyl-tRNA(Sec) required for selenoprotein biosynthesis. The polypeptide is L-seryl-tRNA(Sec) selenium transferase (Mannheimia succiniciproducens (strain KCTC 0769BP / MBEL55E)).